Consider the following 614-residue polypeptide: Phosphomethylpyrimidine synthase (614 aa).

Residues asparagine 226, methionine 255, tyrosine 284, histidine 320, 340-342 (SRG), 381-384 (DGLR), and glutamate 420 contribute to the substrate site. Histidine 424 is a binding site for Zn(2+). Residue tyrosine 447 coordinates substrate. Position 488 (histidine 488) interacts with Zn(2+). [4Fe-4S] cluster is bound by residues cysteine 568, cysteine 571, and cysteine 576.

Belongs to the ThiC family. Homodimer. [4Fe-4S] cluster serves as cofactor.

The enzyme catalyses 5-amino-1-(5-phospho-beta-D-ribosyl)imidazole + S-adenosyl-L-methionine = 4-amino-2-methyl-5-(phosphooxymethyl)pyrimidine + CO + 5'-deoxyadenosine + formate + L-methionine + 3 H(+). It participates in cofactor biosynthesis; thiamine diphosphate biosynthesis. Its function is as follows. Catalyzes the synthesis of the hydroxymethylpyrimidine phosphate (HMP-P) moiety of thiamine from aminoimidazole ribotide (AIR) in a radical S-adenosyl-L-methionine (SAM)-dependent reaction. This Acidovorax ebreus (strain TPSY) (Diaphorobacter sp. (strain TPSY)) protein is Phosphomethylpyrimidine synthase.